The following is a 156-amino-acid chain: SsrA-binding protein (156 aa).

The protein belongs to the SmpB family.

Its subcellular location is the cytoplasm. Functionally, required for rescue of stalled ribosomes mediated by trans-translation. Binds to transfer-messenger RNA (tmRNA), required for stable association of tmRNA with ribosomes. tmRNA and SmpB together mimic tRNA shape, replacing the anticodon stem-loop with SmpB. tmRNA is encoded by the ssrA gene; the 2 termini fold to resemble tRNA(Ala) and it encodes a 'tag peptide', a short internal open reading frame. During trans-translation Ala-aminoacylated tmRNA acts like a tRNA, entering the A-site of stalled ribosomes, displacing the stalled mRNA. The ribosome then switches to translate the ORF on the tmRNA; the nascent peptide is terminated with the 'tag peptide' encoded by the tmRNA and targeted for degradation. The ribosome is freed to recommence translation, which seems to be the essential function of trans-translation. The polypeptide is SsrA-binding protein (Clostridium perfringens (strain 13 / Type A)).